The primary structure comprises 54 residues: Large ribosomal subunit protein bL33C (54 aa).

It belongs to the bacterial ribosomal protein bL33 family.

This is Large ribosomal subunit protein bL33C (rpmG3) from Streptomyces coelicolor (strain ATCC BAA-471 / A3(2) / M145).